An 883-amino-acid polypeptide reads, in one-letter code: Serine/threonine-protein phosphatase BSL1 homolog (883 aa).

Kelch repeat units lie at residues 64-113, 221-271, 273-323, and 341-387; these read ASSG…AVGT, MLLL…VFVG, RLHV…DHDA, and QIYI…NRNH. Disordered regions lie at residues 381–402, 430–466, and 499–525; these read ENQN…STDK, SHAS…SLEP, and NESR…QRSP. The span at 385 to 399 shows a compositional bias: polar residues; the sequence is RNHNFNSDSPTTNNS. Residues aspartate 586, histidine 588, aspartate 620, and asparagine 652 each contribute to the Mn(2+) site. Residue histidine 653 is the Proton donor of the active site. 2 residues coordinate Mn(2+): histidine 705 and histidine 784. The disordered stretch occupies residues 861-883; it reads QRPPTPTRGRPQSASDRNSLAYI. Residues 872 to 883 are compositionally biased toward polar residues; it reads QSASDRNSLAYI.

The protein belongs to the PPP phosphatase family. BSU subfamily. As to quaternary structure, interacts with the phosphorylated form of BSK3. Mn(2+) is required as a cofactor.

Its subcellular location is the nucleus. It carries out the reaction O-phospho-L-seryl-[protein] + H2O = L-seryl-[protein] + phosphate. The enzyme catalyses O-phospho-L-threonyl-[protein] + H2O = L-threonyl-[protein] + phosphate. The chain is Serine/threonine-protein phosphatase BSL1 homolog (BSL1) from Oryza sativa subsp. japonica (Rice).